The chain runs to 180 residues: ATP-dependent protease subunit HslV (180 aa).

Thr-2 is a catalytic residue. Na(+)-binding residues include Gly-158, Cys-161, and Thr-164.

This sequence belongs to the peptidase T1B family. HslV subfamily. In terms of assembly, a double ring-shaped homohexamer of HslV is capped on each side by a ring-shaped HslU homohexamer. The assembly of the HslU/HslV complex is dependent on binding of ATP.

The protein localises to the cytoplasm. It carries out the reaction ATP-dependent cleavage of peptide bonds with broad specificity.. Its activity is regulated as follows. Allosterically activated by HslU binding. Functionally, protease subunit of a proteasome-like degradation complex believed to be a general protein degrading machinery. In Baumannia cicadellinicola subsp. Homalodisca coagulata, this protein is ATP-dependent protease subunit HslV.